The primary structure comprises 144 residues: uncharacterized protein (144 aa).

The N-terminal stretch at 1–22 (MCTDVAFFSLDCLATWLGGVCS) is a signal peptide.

This is an uncharacterized protein from Saccharomyces cerevisiae (strain ATCC 204508 / S288c) (Baker's yeast).